A 244-amino-acid polypeptide reads, in one-letter code: rRNA adenine N-6-methyltransferase (244 aa).

Residues Asn11, Ile13, Gly38, Glu59, Asp84, and Asn101 each coordinate S-adenosyl-L-methionine.

This sequence belongs to the class I-like SAM-binding methyltransferase superfamily. rRNA adenine N(6)-methyltransferase family.

The catalysed reaction is adenosine(2085) in 23S rRNA + 2 S-adenosyl-L-methionine = N(6)-dimethyladenosine(2085) in 23S rRNA + 2 S-adenosyl-L-homocysteine + 2 H(+). Functionally, this protein produces a dimethylation of the adenine residue at position 2085 in 23S rRNA, resulting in reduced affinity between ribosomes and macrolide-lincosamide-streptogramin B antibiotics. This chain is rRNA adenine N-6-methyltransferase (ermM), found in Staphylococcus epidermidis.